The following is a 490-amino-acid chain: ATP synthase subunit beta, plastid (490 aa).

170 to 177 (GGAGVGKT) contacts ATP.

Belongs to the ATPase alpha/beta chains family. F-type ATPases have 2 components, CF(1) - the catalytic core - and CF(0) - the membrane proton channel. CF(1) has five subunits: alpha(3), beta(3), gamma(1), delta(1), epsilon(1). CF(0) has four main subunits: a(1), b(1), b'(1) and c(9-12).

The protein resides in the plastid membrane. The catalysed reaction is ATP + H2O + 4 H(+)(in) = ADP + phosphate + 5 H(+)(out). Produces ATP from ADP in the presence of a proton gradient across the membrane. The catalytic sites are hosted primarily by the beta subunits. In Cuscuta japonica (Japanese dodder), this protein is ATP synthase subunit beta, plastid (atpB).